A 353-amino-acid chain; its full sequence is Rhodopsin (353 aa).

Topologically, residues 1–36 are extracellular; sequence MNGTEGPYFYVPMVNTSGIVRSPYEYPQYYLVNPAA. Residues Asn2 and Asn15 are each glycosylated (N-linked (GlcNAc...) asparagine). Residues 37–61 form a helical membrane-spanning segment; it reads YARLGAYMFLLILVGFPINFLTLYV. Residues 62 to 73 are Cytoplasmic-facing; that stretch reads TIEHKKLRTPLN. A helical membrane pass occupies residues 74–96; sequence YILLNLAVADLFMVFGGFTTTMY. The Extracellular segment spans residues 97-110; the sequence is TSMHGYFVLGRLGC. Cys110 and Cys187 are disulfide-bonded. Residues 111–133 form a helical membrane-spanning segment; it reads NIEGFFATLGGEIALWSLVVLAI. The 'Ionic lock' involved in activated form stabilization motif lies at 134–136; the sequence is ERW. The Cytoplasmic segment spans residues 134 to 152; the sequence is ERWVVVCKPISNFRFGENH. A helical transmembrane segment spans residues 153–173; that stretch reads AIMGLAFTWLMALACAAPPLV. The Extracellular segment spans residues 174 to 202; that stretch reads GWSRYIPEGMQCSCGIDYYTRAEGFNNES. Asn200 carries N-linked (GlcNAc...) asparagine glycosylation. A helical membrane pass occupies residues 203–224; sequence FVIYMFVCHFTVPLMVVFFCYG. Residues 225 to 252 lie on the Cytoplasmic side of the membrane; sequence RLLCAVKEAAAAQQESETTQRAEREVTR. The chain crosses the membrane as a helical span at residues 253-274; sequence MVIMMVVAFLVCWLPYASVAWW. Topologically, residues 275 to 286 are extracellular; that stretch reads IFTHQGSEFGPV. A helical membrane pass occupies residues 287–308; that stretch reads FMTIPAFFAKSSSIYNPMIYIC. An N6-(retinylidene)lysine modification is found at Lys296. Topologically, residues 309–353 are cytoplasmic; that stretch reads LNKQFRHCMITTLCCGKNPFEEEEGASTASKTEASSVSSSSVSPA. Residues Cys322 and Cys323 are each lipidated (S-palmitoyl cysteine). Residues 331–353 form a disordered region; it reads EEGASTASKTEASSVSSSSVSPA. The segment covering 334–353 has biased composition (low complexity); sequence ASTASKTEASSVSSSSVSPA.

The protein belongs to the G-protein coupled receptor 1 family. Opsin subfamily. Post-translationally, phosphorylated on some or all of the serine and threonine residues present in the C-terminal region. Contains one covalently linked retinal chromophore.

The protein localises to the membrane. Its subcellular location is the cell projection. The protein resides in the cilium. It is found in the photoreceptor outer segment. Functionally, photoreceptor required for image-forming vision at low light intensity. While most salt water fish species use retinal as chromophore, most freshwater fish use 3-dehydroretinal, or a mixture of retinal and 3-dehydroretinal. Light-induced isomerization of 11-cis to all-trans retinal triggers a conformational change that activates signaling via G-proteins. Subsequent receptor phosphorylation mediates displacement of the bound G-protein alpha subunit by arrestin and terminates signaling. The polypeptide is Rhodopsin (rho) (Sarpa salpa (Salema)).